Here is a 158-residue protein sequence, read N- to C-terminus: S-ribosylhomocysteine lyase (158 aa).

Histidine 54, histidine 58, and cysteine 124 together coordinate Fe cation.

Belongs to the LuxS family. Homodimer. The cofactor is Fe cation.

The catalysed reaction is S-(5-deoxy-D-ribos-5-yl)-L-homocysteine = (S)-4,5-dihydroxypentane-2,3-dione + L-homocysteine. Its function is as follows. Involved in the synthesis of autoinducer 2 (AI-2) which is secreted by bacteria and is used to communicate both the cell density and the metabolic potential of the environment. The regulation of gene expression in response to changes in cell density is called quorum sensing. Catalyzes the transformation of S-ribosylhomocysteine (RHC) to homocysteine (HC) and 4,5-dihydroxy-2,3-pentadione (DPD). The sequence is that of S-ribosylhomocysteine lyase from Lactobacillus gasseri (strain ATCC 33323 / DSM 20243 / BCRC 14619 / CIP 102991 / JCM 1131 / KCTC 3163 / NCIMB 11718 / NCTC 13722 / AM63).